The primary structure comprises 113 residues: Flagellar transcriptional regulator FlhD (113 aa).

This sequence belongs to the FlhD family. In terms of assembly, homodimer; disulfide-linked. Forms a heterohexamer composed of two FlhC and four FlhD subunits. Each FlhC binds a FlhD dimer, forming a heterotrimer, and a hexamer assembles by dimerization of two heterotrimers.

The protein localises to the cytoplasm. Functionally, functions in complex with FlhC as a master transcriptional regulator that regulates transcription of several flagellar and non-flagellar operons by binding to their promoter region. Activates expression of class 2 flagellar genes, including fliA, which is a flagellum-specific sigma factor that turns on the class 3 genes. Also regulates genes whose products function in a variety of physiological pathways. The protein is Flagellar transcriptional regulator FlhD of Salmonella typhi.